The chain runs to 840 residues: Leucine--tRNA ligase (840 aa).

Residues 44 to 55 carry the 'HIGH' region motif; it reads PYPSANGLHVGH. Residues 617–621 carry the 'KMSKS' region motif; it reads KMSKS. Position 620 (lysine 620) interacts with ATP.

The protein belongs to the class-I aminoacyl-tRNA synthetase family.

The protein localises to the cytoplasm. The catalysed reaction is tRNA(Leu) + L-leucine + ATP = L-leucyl-tRNA(Leu) + AMP + diphosphate. The polypeptide is Leucine--tRNA ligase (Borrelia garinii subsp. bavariensis (strain ATCC BAA-2496 / DSM 23469 / PBi) (Borreliella bavariensis)).